The sequence spans 492 residues: Probable proline dehydrogenase, mitochondrial (492 aa).

It belongs to the proline oxidase family. The cofactor is FAD.

Its subcellular location is the mitochondrion. The enzyme catalyses L-proline + a quinone = (S)-1-pyrroline-5-carboxylate + a quinol + H(+). Functionally, converts proline to delta-1-pyrroline-5-carboxylate. The protein is Probable proline dehydrogenase, mitochondrial of Schizosaccharomyces pombe (strain 972 / ATCC 24843) (Fission yeast).